We begin with the raw amino-acid sequence, 79 residues long: Sec-independent protein translocase protein TatA (79 aa).

The helical transmembrane segment at 1-21 (MGEFSLTHILLLAVIFLIFFG) threads the bilayer. Positions 52 to 79 (DIHDNQQVSHQNKQSMGQTQKQGENQNS) are disordered. A compositionally biased stretch (polar residues) spans 56 to 79 (NQQVSHQNKQSMGQTQKQGENQNS).

This sequence belongs to the TatA/E family. As to quaternary structure, the Tat system comprises two distinct complexes: a TatABC complex, containing multiple copies of TatA, TatB and TatC subunits, and a separate TatA complex, containing only TatA subunits. Substrates initially bind to the TatABC complex, which probably triggers association of the separate TatA complex to form the active translocon.

The protein resides in the cell inner membrane. Part of the twin-arginine translocation (Tat) system that transports large folded proteins containing a characteristic twin-arginine motif in their signal peptide across membranes. TatA could form the protein-conducting channel of the Tat system. The chain is Sec-independent protein translocase protein TatA from Bdellovibrio bacteriovorus (strain ATCC 15356 / DSM 50701 / NCIMB 9529 / HD100).